A 576-amino-acid chain; its full sequence is MSEKNSFNPEGFSYYDCNRIFPYCHNGKCKNFSKLMYLIIKERIYNGHSIIIDHLNQNKNEINHQNEHGWTALMIASVTSSYWCTIDTVKLLLENGADPNIPNYKGETALGLVVGSLTRINCLEINQRTNFLKTAQLLIEYGANVNFQNDFGDSILNHSGGFILNSSLQYNNFDIIKILLDNNTNPNISNNKGNTLLHNICIYNQSCDDIIKLLLNYNVDLNSINLKRKTVLMYLCKFYNKTNNVNSIKLLLKNGANPNIQNTKGNTAMMYLFNKFYHEYGDNKYNIIKLLLQYGANPNIKNNSGISVLLRASTIQNGWERKNIIKFLLKHGADPNITNNQGLTFLMLLVKNPQNHMTKEFLNFVLKYVDPNIKCNKGKNILHYIPSESIDSPDILKRLLEFTTNPNARDYKGRTPLMLACKKFTSTNDIVKINLLVEYSVISLTDNNGKKALDYAMNNTSNIRLFMVSILLEKGDTFDVNIKNDPLSKCLNFVKQSSIAKQKYDIMLSKINIEANKFILRPSSIRTKILTVNWYIEHHNFEKLALCDYSQLMEYLGATDIDDLKLRIMENINYMD.

11 ANK repeats span residues 68–101 (HGWT…DPNI), 118–147 (TRIN…NVNF), 159–188 (SGGF…NPNI), 192–223 (KGNT…DLNS), 227–260 (KRKT…NPNI), 264–300 (KGNT…NPNI), 304–337 (SGIS…DPNI), 341–373 (QGLT…DPNI), 377–408 (KGKN…NPNA), 412–446 (KGRT…SLTD), and 448–480 (NGKK…TFDV).

The protein is Putative ankyrin repeat protein L86 of Acanthamoeba polyphaga mimivirus (APMV).